The sequence spans 466 residues: MVDVLNIESLDLEARGIAHRDGKVLFVEGALPGERVTVQTVRRKPSYEIAKVEEILRPSSQRVAPRCPHFGVCGGCAMQHLAPAAQVAIKQRALEDTFWHVGKLKPARILPPLYGPTWGYRYRARLSVRVVPKKGGVLVGFHERKSSYVADMRECHVLPPAVSRLLLPLRAMIAAMSAPDRMPQIEVALGDEAIVLVLRHLLPLTDGDIAVLRAFAAEHGVQWWLQSKGPDTVHPLEREHADALAYTLPEFGLRMPYRPTDFTQVNHAINRAMVSRALKLLDVQPQDRVADLFCGLGNFTLPLATQGREAVGVEGSKALTDRAHEAAARHGLGERTRFATLNLFEVDVQWLRGLGYFDRMLIDPPREGAQAVVQALSLLAPGERPRRIVYVSCNPGTLARDAAIMVHEGGYALRSAGVINMFPHTGHVESIAVFESLDEATVLQAQAQARQKAREEAERLAEAAAA.

The 54-residue stretch at 1 to 54 (MVDVLNIESLDLEARGIAHRDGKVLFVEGALPGERVTVQTVRRKPSYEIAKVEE) folds into the TRAM domain. [4Fe-4S] cluster contacts are provided by Cys67, Cys73, Cys76, and Cys155. 6 residues coordinate S-adenosyl-L-methionine: Gln264, Phe293, Asn298, Glu314, Asn342, and Asp363. Catalysis depends on Cys393, which acts as the Nucleophile.

It belongs to the class I-like SAM-binding methyltransferase superfamily. RNA M5U methyltransferase family. RlmD subfamily.

The enzyme catalyses uridine(1939) in 23S rRNA + S-adenosyl-L-methionine = 5-methyluridine(1939) in 23S rRNA + S-adenosyl-L-homocysteine + H(+). In terms of biological role, catalyzes the formation of 5-methyl-uridine at position 1939 (m5U1939) in 23S rRNA. The sequence is that of 23S rRNA (uracil(1939)-C(5))-methyltransferase RlmD from Bordetella parapertussis (strain 12822 / ATCC BAA-587 / NCTC 13253).